A 170-amino-acid polypeptide reads, in one-letter code: Gas vesicle protein A2 (170 aa).

The interval 86-170 (SPMAKTVGRA…PRRRTEEEDR (85 aa)) is disordered. Composition is skewed to basic and acidic residues over residues 104–119 (LTDK…HEHE) and 127–137 (DRPRAGAERGR). The span at 138–148 (STQRPRSRPAA) shows a compositional bias: basic residues. The segment covering 149-170 (RPRDEDDRPRSRPRRRTEEEDR) has biased composition (basic and acidic residues).

The protein belongs to the gas vesicle GvpA family. The gas vesicle shell is 2 nm thick and consists of a single layer of this protein. It forms helical ribs nearly perpendicular to the long axis of the vesicle.

Its subcellular location is the gas vesicle shell. In terms of biological role, gas vesicles are hollow, gas filled proteinaceous nanostructures found in some microorganisms. During planktonic growth they allow positioning of the organism at a favorable depth for light or nutrient acquisition. GvpA forms the protein shell. It is not clear what function GVs perform in soil bacteria. In Streptomyces coelicolor (strain ATCC BAA-471 / A3(2) / M145), this protein is Gas vesicle protein A2.